Here is an 82-residue protein sequence, read N- to C-terminus: MKERMRSRMSKQVLTGVVVGAKCDKTIKVMVSRMVSHKMYKKIVKKRKNYVVHDEYNRYKCGDVVQIREHIPISATKRWVVI.

The protein belongs to the universal ribosomal protein uS17 family. In terms of assembly, part of the 30S ribosomal subunit.

Functionally, one of the primary rRNA binding proteins, it binds specifically to the 5'-end of 16S ribosomal RNA. This is Small ribosomal subunit protein uS17 from Ehrlichia ruminantium (strain Gardel).